Here is a 484-residue protein sequence, read N- to C-terminus: Putative cysteine ligase BshC (484 aa).

Positions 372–435 (RAFRDRVEGL…AARDEVLARH (64 aa)) form a coiled coil.

This sequence belongs to the BshC family.

This is Putative cysteine ligase BshC from Thermus thermophilus (strain ATCC 27634 / DSM 579 / HB8).